The chain runs to 61 residues: UPF0312 protein (61 aa).

The protein belongs to the UPF0312 family.

This Delftia acidovorans (Pseudomonas acidovorans) protein is UPF0312 protein.